A 271-amino-acid polypeptide reads, in one-letter code: Protein FAM110D (271 aa).

Disordered regions lie at residues 1 to 83 (MLLA…RPDS), 116 to 145 (PRDA…APEA), and 186 to 245 (PQSW…PVSV). Residues 68 to 78 (RPVRRGSGRRL) show a composition bias toward basic residues. The span at 116 to 126 (PRDAAPSSPAS) shows a compositional bias: low complexity. Residues 220 to 231 (SPGGAGGGGGSE) are compositionally biased toward gly residues.

The protein belongs to the FAM110 family.

The chain is Protein FAM110D (FAM110D) from Homo sapiens (Human).